We begin with the raw amino-acid sequence, 209 residues long: Thiamine-phosphate synthase (209 aa).

Residues 37-41 (QYRDK) and N69 contribute to the 4-amino-2-methyl-5-(diphosphooxymethyl)pyrimidine site. Mg(2+)-binding residues include D70 and D89. S108 serves as a coordination point for 4-amino-2-methyl-5-(diphosphooxymethyl)pyrimidine. A 2-[(2R,5Z)-2-carboxy-4-methylthiazol-5(2H)-ylidene]ethyl phosphate-binding site is contributed by 135–137 (SPT). Residue K138 coordinates 4-amino-2-methyl-5-(diphosphooxymethyl)pyrimidine. 2-[(2R,5Z)-2-carboxy-4-methylthiazol-5(2H)-ylidene]ethyl phosphate contacts are provided by residues G165 and 185–186 (VS).

The protein belongs to the thiamine-phosphate synthase family. Mg(2+) is required as a cofactor.

The catalysed reaction is 2-[(2R,5Z)-2-carboxy-4-methylthiazol-5(2H)-ylidene]ethyl phosphate + 4-amino-2-methyl-5-(diphosphooxymethyl)pyrimidine + 2 H(+) = thiamine phosphate + CO2 + diphosphate. The enzyme catalyses 2-(2-carboxy-4-methylthiazol-5-yl)ethyl phosphate + 4-amino-2-methyl-5-(diphosphooxymethyl)pyrimidine + 2 H(+) = thiamine phosphate + CO2 + diphosphate. It carries out the reaction 4-methyl-5-(2-phosphooxyethyl)-thiazole + 4-amino-2-methyl-5-(diphosphooxymethyl)pyrimidine + H(+) = thiamine phosphate + diphosphate. It participates in cofactor biosynthesis; thiamine diphosphate biosynthesis; thiamine phosphate from 4-amino-2-methyl-5-diphosphomethylpyrimidine and 4-methyl-5-(2-phosphoethyl)-thiazole: step 1/1. Functionally, condenses 4-methyl-5-(beta-hydroxyethyl)thiazole monophosphate (THZ-P) and 2-methyl-4-amino-5-hydroxymethyl pyrimidine pyrophosphate (HMP-PP) to form thiamine monophosphate (TMP). The polypeptide is Thiamine-phosphate synthase (Halorhodospira halophila (strain DSM 244 / SL1) (Ectothiorhodospira halophila (strain DSM 244 / SL1))).